Reading from the N-terminus, the 592-residue chain is MSFVGGGSECSVNGNAVAQFNKHTQQDRSLQQQVANQHGNVAQNQGFKKDNLMNVRDRANLDQFMNNGAPQNSFQFQPMRHELNTIQNQPNAIHQQQSNWSQDFVAQSPSAQITTPIAKTGSPVNAQWASEFSQAPATQQHNQRPGQFGPRLGGYRPMMGMSMAYQSQPQQQQQQQHNQEPQVDWENQFKEIEELTNKAEEVEEIQREQSPEIVVDDKYQATFQEVWDSLNSESFENDFINQQYEDFKRTQKDGFPADMNQWEKDFAKYASTRAHFGDYQFEDKQSNQFLDLPKDQDPYEIGLQLMENGAKLSEAALAFEAAIQRDENHVDAWLKLGEVQTQNEKEIAGISALEKCLELHPENSEALMNLAISYINEGYDNAAFATLERWISTKYPQIVEKARQENPTITDEDRFSLNKRVTELFLNAAQLSPNQASMDADVQMGLGVLFYANEEFDKTIDCFKAALSIRPDDAILWNRLGASLANSNRSEEAVDAYFKALQLKPTFVRARYNLGVSCINIGCYKEAAEHLLSGLSMHQVEGVDTVSTLNHNQSTSLTETLKRAFIAMERRDLLELVKPNMDLNQFRGEFSF.

Cys-10 participates in a covalent cross-link: Glycyl cysteine thioester (Cys-Gly) (interchain with G-Cter in ubiquitin). Positions 11-33 (SVNGNAVAQFNKHTQQDRSLQQQ) are amphipathic helix 1 (AH1). Residue Lys-22 forms a Glycyl lysine isopeptide (Lys-Gly) (interchain with G-Cter in ubiquitin) linkage. A compositionally biased stretch (polar residues) spans 22 to 46 (KHTQQDRSLQQQVANQHGNVAQNQG). Residues 22–49 (KHTQQDRSLQQQVANQHGNVAQNQGFKK) are disordered. The amphipathic helix 2 (AH2) stretch occupies residues 58-76 (RANLDQFMNNGAPQNSFQF). Short sequence motifs (wxxxF/Y motif) lie at residues 100–104 (WSQDF), 128–132 (WASEF), and 185–189 (WENQF). Positions 223–239 (FQEVWDSLNSESFENDF) are amphipathic helix 4 (AH4). Residues 262 to 266 (WEKDF) carry the WxxxF/Y motif 4 motif. 5 TPR repeats span residues 295 to 329 (DQDPYEIGLQLMENGAKLSEAALAFEAAIQRDENH), 330 to 363 (VDAWLKLGEVQTQNEKEIAGISALEKCLELHPEN), 440 to 473 (ADVQMGLGVLFYANEEFDKTIDCFKAALSIRPDD), 475 to 507 (ILWNRLGASLANSNRSEEAVDAYFKALQLKPTF), and 509 to 541 (RARYNLGVSCINIGCYKEAAEHLLSGLSMHQVE).

This sequence belongs to the peroxisomal targeting signal receptor family. Interacts (via WxxxF/Y and LVxEF motifs) with PEX14; promoting translocation through the PEX13-PEX14 docking complex. Monoubiquitinated at Cys-10 by PEX2 during PEX5 passage through the retrotranslocation channel: monoubiquitination acts as a signal for PEX5 extraction and is required for proper export from peroxisomes and recycling. When PEX5 recycling is compromised, polyubiquitinated at Lys-22 by PEX10 during its passage through the retrotranslocation channel, leading to its degradation.

The protein localises to the cytoplasm. The protein resides in the cytosol. It localises to the peroxisome matrix. Receptor that mediates peroxisomal import of proteins containing a C-terminal PTS1-type tripeptide peroxisomal targeting signal (SKL-type). Binds to cargo proteins containing a PTS1 peroxisomal targeting signal in the cytosol, and translocates them into the peroxisome matrix by passing through the PEX13-PEX14 docking complex along with cargo proteins. PEX5 receptor is then retrotranslocated into the cytosol, leading to release of bound cargo in the peroxisome matrix, and reset for a subsequent peroxisome import cycle. The polypeptide is Peroxisomal targeting signal receptor (PEX5) (Candida albicans (strain SC5314 / ATCC MYA-2876) (Yeast)).